We begin with the raw amino-acid sequence, 211 residues long: Large ribosomal subunit protein bL25 (211 aa).

The segment at 175–211 is disordered; that stretch reads VSEPVEQDLGEESETEEEGAEGEKPAESTGEEPGDDE. Positions 179–194 are enriched in acidic residues; that stretch reads VEQDLGEESETEEEGA.

This sequence belongs to the bacterial ribosomal protein bL25 family. CTC subfamily. In terms of assembly, part of the 50S ribosomal subunit; part of the 5S rRNA/L5/L18/L25 subcomplex. Contacts the 5S rRNA. Binds to the 5S rRNA independently of L5 and L18.

In terms of biological role, this is one of the proteins that binds to the 5S RNA in the ribosome where it forms part of the central protuberance. The protein is Large ribosomal subunit protein bL25 of Kocuria rhizophila (strain ATCC 9341 / DSM 348 / NBRC 103217 / DC2201).